The primary structure comprises 734 residues: Rho GTPase-activating protein gacL (734 aa).

One can recognise a Rho-GAP domain in the interval 141–339 (ISLDTLIAKE…QMILHYDTLF (199 aa)). WD repeat units lie at residues 381–430 (GHNK…FIKE), 539–579 (LFMK…TIHQ), and 585–623 (KRPKRMACIEIDDTEYIWIGGDEGSIQIFNSKTFKLEHK).

Its subcellular location is the cytoplasm. In terms of biological role, rho GTPase-activating protein involved in the signal transduction pathway. This Dictyostelium discoideum (Social amoeba) protein is Rho GTPase-activating protein gacL (gacL).